Consider the following 122-residue polypeptide: Large ribosomal subunit protein uL14 (122 aa).

This sequence belongs to the universal ribosomal protein uL14 family. In terms of assembly, part of the 50S ribosomal subunit. Forms a cluster with proteins L3 and L19. In the 70S ribosome, L14 and L19 interact and together make contacts with the 16S rRNA in bridges B5 and B8.

Binds to 23S rRNA. Forms part of two intersubunit bridges in the 70S ribosome. The protein is Large ribosomal subunit protein uL14 of Magnetococcus marinus (strain ATCC BAA-1437 / JCM 17883 / MC-1).